The chain runs to 572 residues: Arginine--tRNA ligase (572 aa).

Positions proline 122 to histidine 132 match the 'HIGH' region motif.

Belongs to the class-I aminoacyl-tRNA synthetase family. In terms of assembly, monomer.

Its subcellular location is the cytoplasm. It catalyses the reaction tRNA(Arg) + L-arginine + ATP = L-arginyl-tRNA(Arg) + AMP + diphosphate. The sequence is that of Arginine--tRNA ligase from Neisseria meningitidis serogroup C / serotype 2a (strain ATCC 700532 / DSM 15464 / FAM18).